Consider the following 157-residue polypeptide: UPF0587 protein C2D10.03c (157 aa).

Zn(2+)-binding residues include Cys-34, Cys-37, Cys-68, and Cys-71.

It belongs to the UPF0587 family.

The protein is UPF0587 protein C2D10.03c of Schizosaccharomyces pombe (strain 972 / ATCC 24843) (Fission yeast).